Reading from the N-terminus, the 305-residue chain is Ornithine carbamoyltransferase (305 aa).

Carbamoyl phosphate-binding positions include 53–56 (STRT), Gln80, Arg104, and 131–134 (HPCQ). L-ornithine-binding positions include Asn162, Asp219, and 223–224 (SM). Carbamoyl phosphate contacts are provided by residues 259–260 (CL) and Arg287.

Belongs to the aspartate/ornithine carbamoyltransferase superfamily. OTCase family.

It localises to the cytoplasm. The enzyme catalyses carbamoyl phosphate + L-ornithine = L-citrulline + phosphate + H(+). Its pathway is amino-acid biosynthesis; L-arginine biosynthesis; L-arginine from L-ornithine and carbamoyl phosphate: step 1/3. In terms of biological role, reversibly catalyzes the transfer of the carbamoyl group from carbamoyl phosphate (CP) to the N(epsilon) atom of ornithine (ORN) to produce L-citrulline. The sequence is that of Ornithine carbamoyltransferase from Psychrobacter cryohalolentis (strain ATCC BAA-1226 / DSM 17306 / VKM B-2378 / K5).